The following is a 154-amino-acid chain: Transcriptional repressor NrdR (154 aa).

A zinc finger spans residues 3–34 (CPFCSAHDTKVIDSRLVAEGDQVRRRRECQAC). Residues 49–139 (PRVIKQDGSR…VYRRFQDLNE (91 aa)) form the ATP-cone domain.

Belongs to the NrdR family. The cofactor is Zn(2+).

Negatively regulates transcription of bacterial ribonucleotide reductase nrd genes and operons by binding to NrdR-boxes. The protein is Transcriptional repressor NrdR of Azotobacter vinelandii (strain DJ / ATCC BAA-1303).